A 216-amino-acid chain; its full sequence is Large ribosomal subunit protein uL24m (216 aa).

Residues 1 to 9 constitute a mitochondrion transit peptide; sequence MRLSALLAL. S24 is modified (phosphoserine). The KOW domain occupies 56–89; sequence LFCGDTVEILEGKDAGKQGKVVQVIRQRNWVVVG.

The protein belongs to the universal ribosomal protein uL24 family. In terms of assembly, component of the mitochondrial large ribosomal subunit (mt-LSU). Mature mammalian 55S mitochondrial ribosomes consist of a small (28S) and a large (39S) subunit. The 28S small subunit contains a 12S ribosomal RNA (12S mt-rRNA) and 30 different proteins. The 39S large subunit contains a 16S rRNA (16S mt-rRNA), a copy of mitochondrial valine transfer RNA (mt-tRNA(Val)), which plays an integral structural role, and 52 different proteins.

It localises to the mitochondrion. The sequence is that of Large ribosomal subunit protein uL24m (MRPL24) from Homo sapiens (Human).